Consider the following 206-residue polypeptide: MASGKFITFEGIDGAGKTTHLQWFCERLQAKLAAGGRQVVVTREPGGTQLGEKLREILLNQPMDLETEALLMFAARREHLALVIEPALARGDWVVSDRFTDATFAYQGGGRGLPRDKLETLERWVQGGFQPDLTVLFDVAPQVASERRGAVRMPDKFESESDAFFSRTRGEYLRRAEEAPHRFAIVDATQSIPEIRQQLERVLAAL.

Position 11–18 (11–18 (GIDGAGKT)) interacts with ATP.

It belongs to the thymidylate kinase family.

The enzyme catalyses dTMP + ATP = dTDP + ADP. Functionally, phosphorylation of dTMP to form dTDP in both de novo and salvage pathways of dTTP synthesis. The chain is Thymidylate kinase from Burkholderia ambifaria (strain MC40-6).